A 434-amino-acid chain; its full sequence is Ribosomal protein uS12 methylthiotransferase RimO (434 aa).

The MTTase N-terminal domain maps to 6–122 (NRVFLLSLGC…ILTAIGARYR (117 aa)). Positions 15, 51, 85, 146, 150, and 153 each coordinate [4Fe-4S] cluster. One can recognise a Radical SAM core domain in the interval 132–361 (TAPGHTSFLK…MELQEGISEE (230 aa)). In terms of domain architecture, TRAM spans 364–431 (KRLEGREIAV…PYELFGTVLK (68 aa)).

Belongs to the methylthiotransferase family. RimO subfamily. It depends on [4Fe-4S] cluster as a cofactor.

Its subcellular location is the cytoplasm. It carries out the reaction L-aspartate(89)-[ribosomal protein uS12]-hydrogen + (sulfur carrier)-SH + AH2 + 2 S-adenosyl-L-methionine = 3-methylsulfanyl-L-aspartate(89)-[ribosomal protein uS12]-hydrogen + (sulfur carrier)-H + 5'-deoxyadenosine + L-methionine + A + S-adenosyl-L-homocysteine + 2 H(+). Catalyzes the methylthiolation of an aspartic acid residue of ribosomal protein uS12. This chain is Ribosomal protein uS12 methylthiotransferase RimO, found in Chlorobium phaeovibrioides (strain DSM 265 / 1930) (Prosthecochloris vibrioformis (strain DSM 265)).